The primary structure comprises 514 residues: Na(+)/H(+) antiporter NhaB (514 aa).

Helical transmembrane passes span 23–43 (LALL…PFIA), 63–83 (PLLP…TSAA), 97–117 (LLLM…LFIF), 120–140 (LLLS…AAAF), 144–164 (FLDA…FYGI), 202–222 (LMMH…VGEP), 238–258 (FFLR…LTCM), 303–323 (AIIG…VGLI), 357–377 (LTVF…APII), 391–411 (LFYL…VGTI), 447–467 (ATPN…APLI), and 475–495 (VWMA…CVEF).

The protein belongs to the NhaB Na(+)/H(+) (TC 2.A.34) antiporter family.

The protein localises to the cell inner membrane. The catalysed reaction is 2 Na(+)(in) + 3 H(+)(out) = 2 Na(+)(out) + 3 H(+)(in). Na(+)/H(+) antiporter that extrudes sodium in exchange for external protons. The protein is Na(+)/H(+) antiporter NhaB of Salmonella heidelberg (strain SL476).